The sequence spans 244 residues: Pyridoxal phosphate homeostasis protein (244 aa).

The residue at position 37 (Lys-37) is an N6-(pyridoxal phosphate)lysine.

Belongs to the pyridoxal phosphate-binding protein YggS/PROSC family.

Its function is as follows. Pyridoxal 5'-phosphate (PLP)-binding protein, which may be involved in intracellular homeostatic regulation of pyridoxal 5'-phosphate (PLP), the active form of vitamin B6. This chain is Pyridoxal phosphate homeostasis protein, found in Caenorhabditis elegans.